Reading from the N-terminus, the 284-residue chain is NAD kinase (284 aa).

Asp70 serves as the catalytic Proton acceptor. Residues 70–71 (DG), 139–140 (NE), Lys167, Asp169, Leu177, 180–185 (TAYNLS), and Gln236 contribute to the NAD(+) site.

It belongs to the NAD kinase family. A divalent metal cation is required as a cofactor.

The protein localises to the cytoplasm. It catalyses the reaction NAD(+) + ATP = ADP + NADP(+) + H(+). Functionally, involved in the regulation of the intracellular balance of NAD and NADP, and is a key enzyme in the biosynthesis of NADP. Catalyzes specifically the phosphorylation on 2'-hydroxyl of the adenosine moiety of NAD to yield NADP. The sequence is that of NAD kinase from Helicobacter pylori (strain HPAG1).